Reading from the N-terminus, the 453-residue chain is Malate dehydrogenase [NADP], chloroplastic (453 aa).

A chloroplast-targeting transit peptide spans methionine 1 to cysteine 68. Residues cysteine 88 and cysteine 93 are joined by a disulfide bond. Glycine 117–serine 123 contacts NADP(+). Arginine 198 and arginine 204 together coordinate substrate. NADP(+) is bound by residues asparagine 211, glutamine 218, and valine 235–asparagine 237. Substrate is bound by residues asparagine 237 and arginine 268. Catalysis depends on histidine 293, which acts as the Proton acceptor. A disulfide bridge links cysteine 429 with cysteine 441.

Belongs to the LDH/MDH superfamily. MDH type 2 family. As to quaternary structure, homodimer.

The protein localises to the plastid. It localises to the chloroplast. It carries out the reaction (S)-malate + NADP(+) = oxaloacetate + NADPH + H(+). Chloroplast NADP-MDH is activated upon illumination. In order to be enzymatically active, disulfide bridges on the protein must be reduced by thioredoxin which receives electrons from ferredoxin and the electron transport system of photosynthesis. In terms of biological role, the chloroplastic, NADP-dependent form is essential for the photosynthesis C4 cycle, which allows plants to circumvent the problem of photorespiration. In C4 plants, NADP-MDH activity acts to convert oxaloacetate to malate in chloroplasts of mesophyll cells for transport to the bundle sheath cells. The sequence is that of Malate dehydrogenase [NADP], chloroplastic from Flaveria bidentis (Coastal plain yellowtops).